Consider the following 64-residue polypeptide: uncharacterized protein (64 aa).

This is an uncharacterized protein from Bos taurus (Bovine).